The chain runs to 362 residues: Adenosine deaminase (362 aa).

Residues His-19 and His-21 each contribute to the Zn(2+) site. Residues His-21, Asp-23, and Gly-181 each contribute to the substrate site. His-208 provides a ligand contact to Zn(2+). Residue Glu-211 is the Proton donor of the active site. Asp-300 contributes to the Zn(2+) binding site.

The protein belongs to the metallo-dependent hydrolases superfamily. Adenosine and AMP deaminases family. Adenosine deaminase subfamily. It depends on Zn(2+) as a cofactor.

It catalyses the reaction adenosine + H2O + H(+) = inosine + NH4(+). It carries out the reaction 2'-deoxyadenosine + H2O + H(+) = 2'-deoxyinosine + NH4(+). Catalyzes the hydrolytic deamination of adenosine and 2-deoxyadenosine. The chain is Adenosine deaminase from Mycolicibacterium vanbaalenii (strain DSM 7251 / JCM 13017 / BCRC 16820 / KCTC 9966 / NRRL B-24157 / PYR-1) (Mycobacterium vanbaalenii).